Here is a 702-residue protein sequence, read N- to C-terminus: MHWILALSLLLLLLLLVASPRLAWLKAGLLSLLLLLLSAWGLVDRLSGDGVNAATLYHLRADMDGAGVSDFSGYIAVFIGMVLLSLSPLVLLRVRRFRRPRGGGAVFGAFVVMLLVSVAVSPLYRDGKRLYYQLRPVDYATVVPEYQVPQQPLQKRKNIVWIYGESLERTYFDEATFPGLMPNLHQLATEAVDVRNLTSTEGSGWTIAGMVASMCGVPLTTAPGDENSMGRMGLFLPEARCLGDYLKDQGYRNHYVGGADASFAGKGSFLASHGFDVVHDVNYFHDKGVAPKHFSAWGVHDDVLLDDAWDSFQTLSRAGQPFMLTTLTMDTHHPAGHLPLACKNQRYESPLGDIGLLHAIKCSDRLIGRLVTRIRNSRYGRNTIIVIASDHLAMPNDLSDVLAKQKRENLLLFLGKDIPPQQVVTRAGSTLDSGATLLQLLEPGMRTLGFGRSLLANDAPPSASVAASRDSGKNYPRYLAYARTLWTGRSTRMLRVNGNGDVVVGVQQVRPPVLLEYDDNTNLKTVYLENTSRQFDRTHSDGTLAYVDRCTAFEDGSADGDWCALVVDRNQHMKLYRDPDLTRGIAVDAPLDVTPQAPRPRVRQPIMLTQAARKTEAGRYMLELYAKRRPTRAFWVEAVSSERKVVLAQQWVVPDASGRIRMPVGLEHAVEDLEIRAWLDYTEEVSVDDLALVKDTAVADRS.

3 helical membrane passes run 3 to 25 (WILA…LAWL), 73 to 95 (GYIA…LRVR), and 102 to 124 (GGGA…SPLY).

This sequence belongs to the OpgB family.

It localises to the cell inner membrane. It carries out the reaction a phosphatidylglycerol + a membrane-derived-oligosaccharide D-glucose = a 1,2-diacyl-sn-glycerol + a membrane-derived-oligosaccharide 6-(glycerophospho)-D-glucose.. The protein operates within glycan metabolism; osmoregulated periplasmic glucan (OPG) biosynthesis. Functionally, transfers a phosphoglycerol residue from phosphatidylglycerol to the membrane-bound nascent glucan backbones. The sequence is that of Phosphoglycerol transferase I from Xanthomonas campestris pv. campestris (strain ATCC 33913 / DSM 3586 / NCPPB 528 / LMG 568 / P 25).